A 447-amino-acid polypeptide reads, in one-letter code: Argininosuccinate synthase (447 aa).

Residues 20–28 (AFSGGLDTS) and Ala46 contribute to the ATP site. Tyr102 contacts L-citrulline. Residues Gly132 and Thr134 each coordinate ATP. L-aspartate contacts are provided by Thr134, Asn138, and Asp139. Residue Asn138 participates in L-citrulline binding. Position 139 (Asp139) interacts with ATP. Residues Arg142 and Ser195 each coordinate L-citrulline. Asp197 serves as a coordination point for ATP. L-citrulline is bound by residues Thr204, Glu206, and Glu283.

Belongs to the argininosuccinate synthase family. Type 2 subfamily. In terms of assembly, homotetramer.

The protein resides in the cytoplasm. The catalysed reaction is L-citrulline + L-aspartate + ATP = 2-(N(omega)-L-arginino)succinate + AMP + diphosphate + H(+). It participates in amino-acid biosynthesis; L-arginine biosynthesis; L-arginine from L-ornithine and carbamoyl phosphate: step 2/3. The polypeptide is Argininosuccinate synthase (argG) (Neisseria meningitidis serogroup B (strain ATCC BAA-335 / MC58)).